Reading from the N-terminus, the 325-residue chain is L-lactate dehydrogenase 1 (325 aa).

NAD(+) contacts are provided by residues Val17, Asp38, Lys43, Tyr68, and 82 to 83; that span reads GA. Substrate contacts are provided by residues Gln85, Arg91, and 123–126; that span reads NPVD. Residues 121–123 and Ser146 contribute to the NAD(+) site; that span reads AAN. 151–154 contributes to the substrate binding site; it reads DTAR. The beta-D-fructose 1,6-bisphosphate site is built by Arg156 and His171. The Proton acceptor role is filled by His178. Tyr223 bears the Phosphotyrosine mark. Substrate is bound at residue Thr232.

Belongs to the LDH/MDH superfamily. LDH family. Homotetramer.

The protein resides in the cytoplasm. It catalyses the reaction (S)-lactate + NAD(+) = pyruvate + NADH + H(+). It participates in fermentation; pyruvate fermentation to lactate; (S)-lactate from pyruvate: step 1/1. With respect to regulation, allosterically activated by fructose 1,6-bisphosphate (FBP). Catalyzes the conversion of lactate to pyruvate. This is L-lactate dehydrogenase 1 from Lactococcus lactis subsp. cremoris (Streptococcus cremoris).